Reading from the N-terminus, the 212-residue chain is Leucine efflux protein (212 aa).

The next 6 helical transmembrane spans lie at 12-32 (TYLV…LFVL), 49-69 (GVFI…ATLI), 71-91 (TTPI…LYLG), 122-142 (ILSL…VQFI), 153-173 (FFIL…FLII), and 188-208 (LAKV…ARLA).

This sequence belongs to the Rht family.

Its subcellular location is the cell inner membrane. It carries out the reaction L-leucine(in) + H(+)(out) = L-leucine(out) + H(+)(in). With respect to regulation, leucine export is inhibited by the proton ionophore carbonyl cyanide m-chlorophenylhydrazone (CCCP). Exporter of leucine. Can also transport its natural analog L-alpha-amino-n-butyric acid and some other structurally unrelated amino acids. Leucine excretion is probably driven by proton motive force. The chain is Leucine efflux protein from Escherichia coli (strain K12).